Here is a 468-residue protein sequence, read N- to C-terminus: tRNA modification GTPase MnmE (468 aa).

Residues Arg-29, Glu-97, and Lys-136 each coordinate (6S)-5-formyl-5,6,7,8-tetrahydrofolate. One can recognise a TrmE-type G domain in the interval 232–390 (GFELAIVGRP…VVAHIVARME (159 aa)). Residue Asn-242 coordinates K(+). GTP-binding positions include 242–247 (NVGKSS), 261–267 (TDLAGTT), and 286–289 (DTAG). Ser-246 provides a ligand contact to Mg(2+). Residues Thr-261, Leu-263, and Thr-266 each contribute to the K(+) site. A Mg(2+)-binding site is contributed by Thr-267. Lys-468 provides a ligand contact to (6S)-5-formyl-5,6,7,8-tetrahydrofolate.

Belongs to the TRAFAC class TrmE-Era-EngA-EngB-Septin-like GTPase superfamily. TrmE GTPase family. As to quaternary structure, homodimer. Heterotetramer of two MnmE and two MnmG subunits. It depends on K(+) as a cofactor.

It is found in the cytoplasm. Exhibits a very high intrinsic GTPase hydrolysis rate. Involved in the addition of a carboxymethylaminomethyl (cmnm) group at the wobble position (U34) of certain tRNAs, forming tRNA-cmnm(5)s(2)U34. The polypeptide is tRNA modification GTPase MnmE (Magnetococcus marinus (strain ATCC BAA-1437 / JCM 17883 / MC-1)).